A 281-amino-acid polypeptide reads, in one-letter code: Transcription factor lfc1 (281 aa).

Positions 60-87 form a DNA-binding region, zn(2)-C6 fungal-type; sequence CLTCRMKKIKCDETKPTCARCTHGQREC.

It localises to the nucleus. Transcription factor that acts as a negative regulator of basidioma development via repressing the expression of genes involved in basidioma development, including hydrophobins such as Hyd-1 and Hyd-8, lectins such as JRL1, as well as the fruiting body differentiation gene FVFD16. The chain is Transcription factor lfc1 from Flammulina velutipes (Agaricus velutipes).